A 206-amino-acid polypeptide reads, in one-letter code: Insecticyanin-B (206 aa).

Residues M1–A17 form the signal peptide. Intrachain disulfides connect C26/C136 and C60/C192.

This sequence belongs to the calycin superfamily. Lipocalin family. In terms of assembly, homotetramer. As to expression, synthesized only in the caterpillars, apparently by the epidermis and secreted into the hemolymph. The protein is passed over from the larval hemolymph to that of pupae and adults and is sequestered in the eggs.

The protein localises to the secreted. Functionally, this protein binds a chromophore: biliverdin IX, isomer gamma. Mixed with lipoprotein-bound carotenes, this blue protein provides hornworms with their green cryptic coloration which serves a camouflage. The polypeptide is Insecticyanin-B (INSB) (Manduca sexta (Tobacco hawkmoth)).